The following is a 466-amino-acid chain: Hepatocyte nuclear factor 3-alpha (466 aa).

Residues 169–260 (AKPPYSYISL…GNMFENGCYL (92 aa)) constitute a DNA-binding region (fork-head). Residues 251-288 (GNMFENGCYLRRQKRFKCEKQPGAGGGSGGGGSKGVPE) are essential for DNA binding. A disordered region spans residues 269-358 (EKQPGAGGGS…ASSSAPPISS (90 aa)). Over residues 273–284 (GAGGGSGGGGSK) the composition is skewed to gly residues. 2 positions are modified to phosphoserine: S303 and S327. 2 stretches are compositionally biased toward low complexity: residues 318–328 (GAPAPGPAASP) and 344–358 (ELKS…PISS).

In terms of assembly, binds DNA as a monomer. Interacts with FOXA2. Interacts with NKX2-1. Interacts with HDAC7. Interacts with the histone H3-H4 heterodimer. Associates with nucleosomes containing histone H2A. Interacts with AR. Interacts with NR0B2. As to expression, liver.

It localises to the nucleus. Transcription factor that is involved in embryonic development, establishment of tissue-specific gene expression and regulation of gene expression in differentiated tissues. Is thought to act as a 'pioneer' factor opening the compacted chromatin for other proteins through interactions with nucleosomal core histones and thereby replacing linker histones at target enhancer and/or promoter sites. Binds DNA with the consensus sequence 5'-[AC]A[AT]T[AG]TT[GT][AG][CT]T[CT]-3'. Proposed to play a role in translating the epigenetic signatures into cell type-specific enhancer-driven transcriptional programs. Involved in glucose homeostasis; activates the GCG promoter. Involved in the development of multiple endoderm-derived organ systems such as the liver, pancreas, lungs and prostate; FOXA1 and FOXA2 seem to have at least in part redundant roles. Modulates the transcriptional activity of nuclear hormone receptors. Is required for maximal gene activation mediated by AR in the prostate. Negatively regulates AR transactivation via competition with coactivators such as NCOA2. Is involved in ESR1-mediated transcription. Involved in regulation of apoptosis. Involved in cell cycle regulation. Originally described as a transcription activator for a number of liver genes such as AFP, albumin, tyrosine aminotransferase, PEPCK, etc. Interacts with the cis-acting regulatory regions of these genes. This is Hepatocyte nuclear factor 3-alpha (Foxa1) from Rattus norvegicus (Rat).